Consider the following 336-residue polypeptide: Holliday junction branch migration complex subunit RuvB (336 aa).

Positions 4–184 (ADRLVAPGSI…FGIVQRLEFY (181 aa)) are large ATPase domain (RuvB-L). Residues Ile23, Arg24, Gly65, Lys68, Thr69, Thr70, 131 to 133 (EDY), Arg174, Tyr184, and Arg221 contribute to the ATP site. Thr69 is a Mg(2+) binding site. The tract at residues 185–255 (QVADLQHIVS…VASQALDMLN (71 aa)) is small ATPAse domain (RuvB-S). A head domain (RuvB-H) region spans residues 258–336 (AEGFDYMDRK…HFGITPPQMP (79 aa)). DNA contacts are provided by Arg294, Arg313, and Arg318.

Belongs to the RuvB family. As to quaternary structure, homohexamer. Forms an RuvA(8)-RuvB(12)-Holliday junction (HJ) complex. HJ DNA is sandwiched between 2 RuvA tetramers; dsDNA enters through RuvA and exits via RuvB. An RuvB hexamer assembles on each DNA strand where it exits the tetramer. Each RuvB hexamer is contacted by two RuvA subunits (via domain III) on 2 adjacent RuvB subunits; this complex drives branch migration. In the full resolvosome a probable DNA-RuvA(4)-RuvB(12)-RuvC(2) complex forms which resolves the HJ.

It is found in the cytoplasm. It catalyses the reaction ATP + H2O = ADP + phosphate + H(+). In terms of biological role, the RuvA-RuvB-RuvC complex processes Holliday junction (HJ) DNA during genetic recombination and DNA repair, while the RuvA-RuvB complex plays an important role in the rescue of blocked DNA replication forks via replication fork reversal (RFR). RuvA specifically binds to HJ cruciform DNA, conferring on it an open structure. The RuvB hexamer acts as an ATP-dependent pump, pulling dsDNA into and through the RuvAB complex. RuvB forms 2 homohexamers on either side of HJ DNA bound by 1 or 2 RuvA tetramers; 4 subunits per hexamer contact DNA at a time. Coordinated motions by a converter formed by DNA-disengaged RuvB subunits stimulates ATP hydrolysis and nucleotide exchange. Immobilization of the converter enables RuvB to convert the ATP-contained energy into a lever motion, pulling 2 nucleotides of DNA out of the RuvA tetramer per ATP hydrolyzed, thus driving DNA branch migration. The RuvB motors rotate together with the DNA substrate, which together with the progressing nucleotide cycle form the mechanistic basis for DNA recombination by continuous HJ branch migration. Branch migration allows RuvC to scan DNA until it finds its consensus sequence, where it cleaves and resolves cruciform DNA. The protein is Holliday junction branch migration complex subunit RuvB of Cronobacter sakazakii (strain ATCC BAA-894) (Enterobacter sakazakii).